A 253-amino-acid polypeptide reads, in one-letter code: Adapter protein MecA (253 aa).

It belongs to the MecA family. In terms of assembly, homodimer.

Its function is as follows. Enables the recognition and targeting of unfolded and aggregated proteins to the ClpC protease or to other proteins involved in proteolysis. The chain is Adapter protein MecA from Streptococcus pyogenes serotype M6 (strain ATCC BAA-946 / MGAS10394).